Reading from the N-terminus, the 541-residue chain is Cilia- and flagella-associated protein 97 (541 aa).

Residues serine 8 and serine 19 each carry the phosphoserine modification. 5 disordered regions span residues 28–47 (ESNS…GINK), 93–296 (ERKA…KQEN), 313–337 (RCVK…VLDA), 406–430 (LSRQ…PPKL), and 495–514 (HYSP…GLSC). Basic and acidic residues-rich tracts occupy residues 35 to 47 (KQND…GINK), 93 to 107 (ERKA…HIEN), and 142 to 151 (RIPKIVKGED). Over residues 152-161 (DYYTDGEESS) the composition is skewed to acidic residues. Threonine 155 carries the phosphothreonine modification. Phosphoserine is present on residues serine 160 and serine 161. Low complexity predominate over residues 176–201 (SSNLKKNVSKKYSSSSLSSSSSRSNS). The segment covering 207 to 218 (GSDRQRRSESHS) has biased composition (basic and acidic residues). Composition is skewed to polar residues over residues 219-232 (SGKC…SSPK) and 240-250 (KSSAQPSSTKQ). The residue at position 230 (serine 230) is a Phosphoserine. Phosphoserine is present on serine 258. Polar residues predominate over residues 267–277 (PLSTPDVSPAQ). Residues 287-296 (QKVKVKKQEN) are compositionally biased toward basic and acidic residues. Positions 382–459 (RKNYSFTREE…ALLKRLEAVK (78 aa)) form a coiled coil. Residues 503–513 (SRTSSATSGLS) are compositionally biased toward polar residues.

The protein belongs to the CFAP97 family. As to expression, highly expressed in testis with lower levels detected in other tissues including lung, heart and kidney.

The sequence is that of Cilia- and flagella-associated protein 97 from Mus musculus (Mouse).